We begin with the raw amino-acid sequence, 252 residues long: NADH-quinone oxidoreductase subunit E (252 aa).

[2Fe-2S] cluster is bound by residues Cys-114, Cys-119, Cys-155, and Cys-159. The interval 211-252 is disordered; that stretch reads LAGLPDQRPDEGQGGPGAPTLAGLQVARKNDMQAPPTPGADE.

The protein belongs to the complex I 24 kDa subunit family. [2Fe-2S] cluster is required as a cofactor.

It catalyses the reaction a quinone + NADH + 5 H(+)(in) = a quinol + NAD(+) + 4 H(+)(out). NDH-1 shuttles electrons from NADH, via FMN and iron-sulfur (Fe-S) centers, to quinones in the respiratory chain. The immediate electron acceptor for the enzyme in this species is believed to be menaquinone. Couples the redox reaction to proton translocation (for every two electrons transferred, four hydrogen ions are translocated across the cytoplasmic membrane), and thus conserves the redox energy in a proton gradient. The sequence is that of NADH-quinone oxidoreductase subunit E (nuoE) from Mycobacterium bovis (strain ATCC BAA-935 / AF2122/97).